The sequence spans 315 residues: Homoserine kinase (315 aa).

An ATP-binding site is contributed by proline 97–threonine 107.

The protein belongs to the GHMP kinase family. Homoserine kinase subfamily.

It is found in the cytoplasm. The catalysed reaction is L-homoserine + ATP = O-phospho-L-homoserine + ADP + H(+). It participates in amino-acid biosynthesis; L-threonine biosynthesis; L-threonine from L-aspartate: step 4/5. Its function is as follows. Catalyzes the ATP-dependent phosphorylation of L-homoserine to L-homoserine phosphate. This is Homoserine kinase from Synechococcus sp. (strain WH7803).